The chain runs to 459 residues: Siroheme synthase 2 (459 aa).

The precorrin-2 dehydrogenase /sirohydrochlorin ferrochelatase stretch occupies residues 1 to 204 (MDYLPIFCQL…EDRERVQQLT (204 aa)). NAD(+)-binding positions include 22 to 23 (EI) and 43 to 44 (LD). The residue at position 128 (Ser128) is a Phosphoserine. Residues 216–459 (GEVTLVGAGP…KLSWFSDQTA (244 aa)) are uroporphyrinogen-III C-methyltransferase. Residue Pro225 coordinates S-adenosyl-L-methionine. The Proton acceptor role is filled by Asp248. Lys270 functions as the Proton donor in the catalytic mechanism. S-adenosyl-L-methionine contacts are provided by residues 301–303 (GGD), Ile306, 331–332 (TA), Met382, and Gly411.

It in the N-terminal section; belongs to the precorrin-2 dehydrogenase / sirohydrochlorin ferrochelatase family. In the C-terminal section; belongs to the precorrin methyltransferase family.

It catalyses the reaction uroporphyrinogen III + 2 S-adenosyl-L-methionine = precorrin-2 + 2 S-adenosyl-L-homocysteine + H(+). The enzyme catalyses precorrin-2 + NAD(+) = sirohydrochlorin + NADH + 2 H(+). It carries out the reaction siroheme + 2 H(+) = sirohydrochlorin + Fe(2+). Its pathway is cofactor biosynthesis; adenosylcobalamin biosynthesis; precorrin-2 from uroporphyrinogen III: step 1/1. The protein operates within cofactor biosynthesis; adenosylcobalamin biosynthesis; sirohydrochlorin from precorrin-2: step 1/1. It functions in the pathway porphyrin-containing compound metabolism; siroheme biosynthesis; precorrin-2 from uroporphyrinogen III: step 1/1. It participates in porphyrin-containing compound metabolism; siroheme biosynthesis; siroheme from sirohydrochlorin: step 1/1. Its pathway is porphyrin-containing compound metabolism; siroheme biosynthesis; sirohydrochlorin from precorrin-2: step 1/1. Functionally, multifunctional enzyme that catalyzes the SAM-dependent methylations of uroporphyrinogen III at position C-2 and C-7 to form precorrin-2 via precorrin-1. Then it catalyzes the NAD-dependent ring dehydrogenation of precorrin-2 to yield sirohydrochlorin. Finally, it catalyzes the ferrochelation of sirohydrochlorin to yield siroheme. This is Siroheme synthase 2 from Pectobacterium atrosepticum (strain SCRI 1043 / ATCC BAA-672) (Erwinia carotovora subsp. atroseptica).